A 314-amino-acid polypeptide reads, in one-letter code: BRCA2 and CDKN1A-interacting protein (314 aa).

A disordered region spans residues M1 to E56. Acidic residues predominate over residues D25 to E56. A phosphoserine mark is found at S42 and S112. The tract at residues I59–K167 is interaction with BRCA2. An interaction with CDKN1A region spans residues M161–K259. A Phosphoserine modification is found at S281.

Belongs to the BCP1 family. In terms of assembly, interacts with BRCA2, CDKN1A and MTDH/LYRIC. Isoform 2/alpha, but not isoform 1/beta, interacts with DCTN1/p150-glued and ACTR1A/ARP1. Both isoform 1 and isoform 2 interact with alpha-, beta- and gamma-tubulins. Interacts with TENT5C; the interaction has no effect on TENT5C poly(A) polymerase function. In terms of tissue distribution, expressed at high levels in testis and skeletal muscle and at lower levels in brain, heart, kidney, liver, lung, ovary, pancreas, placenta, and spleen.

The protein localises to the nucleus. The protein resides in the cytoplasm. It localises to the cytoskeleton. It is found in the microtubule organizing center. Its subcellular location is the centrosome. The protein localises to the centriole. The protein resides in the spindle pole. In terms of biological role, during interphase, required for microtubule organizing and anchoring activities. During mitosis, required for the organization and stabilization of the spindle pole. Isoform 2/alpha is particularly important for the regulation of microtubule anchoring, microtubule stability, spindle architecture and spindle orientation, compared to isoform 1/beta. May promote cell cycle arrest by enhancing the inhibition of CDK2 activity by CDKN1A. May be required for repair of DNA damage by homologous recombination in conjunction with BRCA2. May not be involved in non-homologous end joining (NHEJ). This is BRCA2 and CDKN1A-interacting protein (BCCIP) from Homo sapiens (Human).